We begin with the raw amino-acid sequence, 589 residues long: Putative sphingomyelin phosphodiesterase asm-3 (589 aa).

The N-terminal stretch at 1–17 (MLLGLLVLSLAFQGTLA) is a signal peptide. The Saposin B-type domain maps to 18 to 101 (VTECEECKSI…LMKNDCGDFV (84 aa)). Disulfide bonds link cysteine 21-cysteine 97, cysteine 24-cysteine 89, and cysteine 52-cysteine 63. Residue asparagine 109 is glycosylated (N-linked (GlcNAc...) asparagine). 2 residues coordinate Zn(2+): aspartate 139 and histidine 141. Intrachain disulfides connect cysteine 154–cysteine 159 and cysteine 160–cysteine 188. Aspartate 217 contacts Zn(2+). N-linked (GlcNAc...) asparagine glycosylation is present at asparagine 237. Asparagine 257 serves as a coordination point for Zn(2+). N-linked (GlcNAc...) asparagine glycosylation occurs at asparagine 334. Histidine 364, histidine 398, and histidine 400 together coordinate Zn(2+). Asparagine 463 carries an N-linked (GlcNAc...) asparagine glycan. Intrachain disulfides connect cysteine 530-cysteine 535 and cysteine 541-cysteine 553. A disordered region spans residues 562-589 (KPEPKKNKYSARFATSNERRRGKEECKI). A compositionally biased stretch (basic and acidic residues) spans 578–589 (NERRRGKEECKI).

This sequence belongs to the acid sphingomyelinase family. Zn(2+) is required as a cofactor.

The protein localises to the secreted. The catalysed reaction is an N-(acyl)-sphingosylphosphocholine + H2O = an N-acyl-sphingoid base + phosphocholine + H(+). The enzyme catalyses a sphingomyelin + H2O = phosphocholine + an N-acylsphing-4-enine + H(+). It catalyses the reaction an N-acyl-15-methylhexadecasphing-4-enine-1-phosphocholine + H2O = an N-acyl-15-methylhexadecasphing-4-enine + phosphocholine + H(+). Its pathway is lipid metabolism; sphingolipid metabolism. Functionally, converts sphingomyelin to ceramide (N-acyl-sphingoid base) and phosphocholine. C.elegans contain specific sphingoid bases, which are unique or different in structure compared to the sphingoid bases found in other animals. Two examples of these distinctive compounds are: 15-methylhexadecasphinganine and 15-methylhexadecasphing-4-enine. This chain is Putative sphingomyelin phosphodiesterase asm-3 (asm-3), found in Caenorhabditis elegans.